Here is a 206-residue protein sequence, read N- to C-terminus: Pyridoxine/pyridoxamine 5'-phosphate oxidase (206 aa).

Residues 55–60, 70–71, Arg76, Lys77, and Gln99 each bind FMN; these read RVVLLK and YT. Lys60 is a binding site for substrate. Residues Tyr117, Arg121, and Ser125 each coordinate substrate. FMN-binding positions include 134–135 and Trp179; that span reads QS. Residue 185 to 187 participates in substrate binding; the sequence is RLH. Arg189 contributes to the FMN binding site.

The protein belongs to the pyridoxamine 5'-phosphate oxidase family. In terms of assembly, homodimer. FMN is required as a cofactor.

The catalysed reaction is pyridoxamine 5'-phosphate + O2 + H2O = pyridoxal 5'-phosphate + H2O2 + NH4(+). It catalyses the reaction pyridoxine 5'-phosphate + O2 = pyridoxal 5'-phosphate + H2O2. The protein operates within cofactor metabolism; pyridoxal 5'-phosphate salvage; pyridoxal 5'-phosphate from pyridoxamine 5'-phosphate: step 1/1. It functions in the pathway cofactor metabolism; pyridoxal 5'-phosphate salvage; pyridoxal 5'-phosphate from pyridoxine 5'-phosphate: step 1/1. Its function is as follows. Catalyzes the oxidation of either pyridoxine 5'-phosphate (PNP) or pyridoxamine 5'-phosphate (PMP) into pyridoxal 5'-phosphate (PLP). The chain is Pyridoxine/pyridoxamine 5'-phosphate oxidase from Myxococcus xanthus (strain DK1622).